The primary structure comprises 372 residues: MLRTIKSPIKVIVRPASASASANAEKLDEIRERLAKGPSFQDFIQNPNNTKNEWDNYDGKLRREKVEEQRLRLPPWLKTTIPMGKNYAKIKDQLRELKLSTVCEEARCPNIGECWGGGEHGTQTATIMLMGDTCTRGCRFCSVKTARAPPPLDENEPVNTAKAVASWGLDYIVLTSVDRDDLSDGGSKHIAQTVKEIKARNQNIFVECLVPDFRGDLECVKTIANCGLDVYAHNIETVEKLTPFVRDRRAHYRQTLKVLSEAKRFNPNLITKSSIMLGLGETDAEVEQTMLDLREVGVECLTLGQYMQPTKKHLKVIEYVTPEKFKHWEERGNQLGFLYTASGPLVRSSYKAGEFFITSILANRKKQNDAPK.

[4Fe-4S] cluster is bound by residues Cys-103, Cys-108, Cys-114, Cys-134, Cys-138, Cys-141, and Ser-349. The Radical SAM core domain occupies 119–338 (EHGTQTATIM…EERGNQLGFL (220 aa)).

It belongs to the radical SAM superfamily. Lipoyl synthase family. [4Fe-4S] cluster is required as a cofactor.

The protein resides in the mitochondrion. It catalyses the reaction [[Fe-S] cluster scaffold protein carrying a second [4Fe-4S](2+) cluster] + N(6)-octanoyl-L-lysyl-[protein] + 2 oxidized [2Fe-2S]-[ferredoxin] + 2 S-adenosyl-L-methionine + 4 H(+) = [[Fe-S] cluster scaffold protein] + N(6)-[(R)-dihydrolipoyl]-L-lysyl-[protein] + 4 Fe(3+) + 2 hydrogen sulfide + 2 5'-deoxyadenosine + 2 L-methionine + 2 reduced [2Fe-2S]-[ferredoxin]. It functions in the pathway protein modification; protein lipoylation via endogenous pathway; protein N(6)-(lipoyl)lysine from octanoyl-[acyl-carrier-protein]: step 2/2. Its function is as follows. Catalyzes the radical-mediated insertion of two sulfur atoms into the C-6 and C-8 positions of the octanoyl moiety bound to the lipoyl domains of lipoate-dependent enzymes, thereby converting the octanoylated domains into lipoylated derivatives. This Drosophila willistoni (Fruit fly) protein is Lipoyl synthase, mitochondrial.